The primary structure comprises 360 residues: DNA replication and repair protein RecF (360 aa).

30–37 (GANGSGKT) is a binding site for ATP.

It belongs to the RecF family.

The protein resides in the cytoplasm. Functionally, the RecF protein is involved in DNA metabolism; it is required for DNA replication and normal SOS inducibility. RecF binds preferentially to single-stranded, linear DNA. It also seems to bind ATP. The protein is DNA replication and repair protein RecF of Acinetobacter baumannii (strain AB307-0294).